The primary structure comprises 421 residues: Histidine--tRNA ligase (421 aa).

Belongs to the class-II aminoacyl-tRNA synthetase family. Homodimer.

It localises to the cytoplasm. It catalyses the reaction tRNA(His) + L-histidine + ATP = L-histidyl-tRNA(His) + AMP + diphosphate + H(+). The polypeptide is Histidine--tRNA ligase (Coxiella burnetii (strain Dugway 5J108-111)).